The chain runs to 239 residues: Small ribosomal subunit protein uS3 (239 aa).

One can recognise a KH type-2 domain in the interval 39–107; sequence VRQVLRKKMS…SVHINVIEVR (69 aa). Residues 214–239 form a disordered region; it reads GQEKQDDGSRGDRNADRSSRRSREVR. The span at 216 to 239 shows a compositional bias: basic and acidic residues; it reads EKQDDGSRGDRNADRSSRRSREVR.

It belongs to the universal ribosomal protein uS3 family. Part of the 30S ribosomal subunit. Forms a tight complex with proteins S10 and S14.

Functionally, binds the lower part of the 30S subunit head. Binds mRNA in the 70S ribosome, positioning it for translation. The sequence is that of Small ribosomal subunit protein uS3 from Xylella fastidiosa (strain M12).